The following is a 132-amino-acid chain: Small ribosomal subunit protein uS8 (132 aa).

The protein belongs to the universal ribosomal protein uS8 family. In terms of assembly, part of the 30S ribosomal subunit. Contacts proteins S5 and S12.

Its function is as follows. One of the primary rRNA binding proteins, it binds directly to 16S rRNA central domain where it helps coordinate assembly of the platform of the 30S subunit. This chain is Small ribosomal subunit protein uS8, found in Bartonella henselae (strain ATCC 49882 / DSM 28221 / CCUG 30454 / Houston 1) (Rochalimaea henselae).